A 247-amino-acid polypeptide reads, in one-letter code: tRNA pseudouridine synthase A (247 aa).

The active-site Nucleophile is the aspartate 52. Tyrosine 113 contacts substrate.

The protein belongs to the tRNA pseudouridine synthase TruA family. In terms of assembly, homodimer.

The catalysed reaction is uridine(38/39/40) in tRNA = pseudouridine(38/39/40) in tRNA. In terms of biological role, formation of pseudouridine at positions 38, 39 and 40 in the anticodon stem and loop of transfer RNAs. The polypeptide is tRNA pseudouridine synthase A (Sinorhizobium fredii (strain NBRC 101917 / NGR234)).